A 1976-amino-acid polypeptide reads, in one-letter code: Myosin-10 (1976 aa).

Arg18 carries the post-translational modification Omega-N-methylarginine. The Myosin N-terminal SH3-like domain maps to Thr31 to Pro81. Residues Ser85–Asp783 form the Myosin motor domain. Gly178–Thr185 contacts ATP. Position 442 is an N6-acetyllysine (Lys442). The interval Leu661 to His683 is actin-binding. The region spanning Ile786–Ala815 is the IQ domain. Residues Leu845–Glu1976 are a coiled coil. A disordered region spans residues Glu1125 to Glu1175. A compositionally biased stretch (basic and acidic residues) spans Ser1129 to Leu1155. Ser1145 bears the Phosphoserine mark. Lys1241, Lys1301, and Lys1645 each carry N6-acetyllysine. Disordered stretches follow at residues Ala1697–Ala1718 and Lys1874–Glu1976. Over residues Ser1698 to Gln1708 the composition is skewed to basic and acidic residues. An Omega-N-methylarginine modification is found at Arg1930. A phosphoserine mark is found at Ser1935, Ser1937, Ser1938, and Ser1939. At Arg1940 the chain carries Omega-N-methylarginine. Ser1952 and Ser1956 each carry phosphoserine. Thr1960 is subject to Phosphothreonine. Over residues Val1967 to Glu1976 the composition is skewed to polar residues. Ser1975 is modified (phosphoserine).

It belongs to the TRAFAC class myosin-kinesin ATPase superfamily. Myosin family. As to quaternary structure, myosin is a hexameric protein that consists of 2 heavy chain subunits (MHC), 2 alkali light chain subunits (MLC) and 2 regulatory light chain subunits (MLC-2). Interacts with PLEKHG6. Interacts with ECPAS. Interacts with LARP6. Interacts with MCC. Interacts with KIF26B. Interacts with CFAP95. Post-translationally, phosphorylated by ABL2. In terms of tissue distribution, in newborn kidney, expressed in the mesenchyme and ureteric buds.

It is found in the cell projection. The protein resides in the lamellipodium. In terms of biological role, involved with LARP6 in the stabilization of type I collagen mRNAs for CO1A1 and CO1A2. During cell spreading, plays an important role in cytoskeleton reorganization, focal contacts formation (in the central part but not the margins of spreading cells), and lamellipodial extension; this function is mechanically antagonized by MYH9. Cellular myosin that appears to play a role in cytokinesis, cell shape, and specialized functions such as secretion and capping. In Mus musculus (Mouse), this protein is Myosin-10 (Myh10).